The chain runs to 341 residues: KRR1 small subunit processome component homolog (341 aa).

One can recognise a KH domain in the interval 126–194 (DIIKIGNLVH…VRDIVLETMN (69 aa)). The span at 230-244 (KNKNISKRKQPKSRK) shows a compositional bias: basic residues. The disordered stretch occupies residues 230–327 (KNKNISKRKQ…RPSEASKVDV (98 aa)). Residues 271-341 (FLNKEQKQAK…AKLLKANKQK (71 aa)) adopt a coiled-coil conformation. Basic and acidic residues-rich tracts occupy residues 272–303 (LNKE…RNKD) and 313–327 (EQNR…KVDV).

It belongs to the KRR1 family. In terms of assembly, monomer. Component of the ribosomal small subunit (SSU) processome.

The protein localises to the nucleus. It is found in the nucleolus. Its function is as follows. Required for 40S ribosome biogenesis. Involved in nucleolar processing of pre-18S ribosomal RNA and ribosome assembly. Binds to RNA. Required for female germline development, cell viability during eye development and for survival of dividing cells and epithelial cells during early wing disk development. The polypeptide is KRR1 small subunit processome component homolog (Drosophila grimshawi (Hawaiian fruit fly)).